We begin with the raw amino-acid sequence, 289 residues long: Somatostatin-like receptor F_48D10.1 (289 aa).

Residues 1–57 lie on the Extracellular side of the membrane; the sequence is MEPLDQTPGFPLSPEPNYWYETTPSLLLVSYPHLLDISSNQSTQSVPFQGSSALLTA. A glycan (N-linked (GlcNAc...) asparagine) is linked at N40. A helical transmembrane segment spans residues 58–79; it reads VIYITVFVVGLTGNTLAIYVVL. At 80–89 the chain is on the cytoplasmic side; the sequence is RYAGMKTVTN. A helical membrane pass occupies residues 90–110; the sequence is IYILNLAVADELYIVGLPFLA. Over 111-126 the chain is Extracellular; sequence TQNVLSYWPFGSFLCR. A disulfide bridge links C125 with C221. A helical transmembrane segment spans residues 127–148; sequence VVMTADSMNQFTSIFCLTVMSI. The Cytoplasmic portion of the chain corresponds to 149 to 170; the sequence is DRYLAVVHPIRSTKWRHPRVAK. Residues 171–191 traverse the membrane as a helical segment; the sequence is VVSAAVWAVSFVVVLPVVIFS. Residues 192-240 lie on the Extracellular side of the membrane; sequence DVQVRPSRPLQVGTSSKCLVKRVQETFNSCNMIWPEPKNVWSTAFILYT. The helical transmembrane segment at 241-261 threads the bilayer; the sequence is AMVGFFGPLLIICLCYLLIVI. Residues 262-289 lie on the Cytoplasmic side of the membrane; it reads KVRHRMSAAQVGAVVSTCPLNICCLSRR.

The protein belongs to the G-protein coupled receptor 1 family.

It localises to the cell membrane. The protein is Somatostatin-like receptor F_48D10.1 of Takifugu rubripes (Japanese pufferfish).